A 145-amino-acid chain; its full sequence is D-aminoacyl-tRNA deacylase (145 aa).

The short motif at 137-138 is the Gly-cisPro motif, important for rejection of L-amino acids element; that stretch reads GP.

It belongs to the DTD family. As to quaternary structure, homodimer.

The protein resides in the cytoplasm. The catalysed reaction is glycyl-tRNA(Ala) + H2O = tRNA(Ala) + glycine + H(+). The enzyme catalyses a D-aminoacyl-tRNA + H2O = a tRNA + a D-alpha-amino acid + H(+). Its function is as follows. An aminoacyl-tRNA editing enzyme that deacylates mischarged D-aminoacyl-tRNAs. Also deacylates mischarged glycyl-tRNA(Ala), protecting cells against glycine mischarging by AlaRS. Acts via tRNA-based rather than protein-based catalysis; rejects L-amino acids rather than detecting D-amino acids in the active site. By recycling D-aminoacyl-tRNA to D-amino acids and free tRNA molecules, this enzyme counteracts the toxicity associated with the formation of D-aminoacyl-tRNA entities in vivo and helps enforce protein L-homochirality. This Aeromonas hydrophila subsp. hydrophila (strain ATCC 7966 / DSM 30187 / BCRC 13018 / CCUG 14551 / JCM 1027 / KCTC 2358 / NCIMB 9240 / NCTC 8049) protein is D-aminoacyl-tRNA deacylase.